A 577-amino-acid polypeptide reads, in one-letter code: Protein NUCLEOLAR COMPLEX ASSOCIATED 4 (577 aa).

The interval 230 to 263 (PEKQAEKSQHEMWSGSDESISEKPTDKKKKTEKG) is disordered. 3 helical membrane passes run 329–349 (IGGVVSVMALSSLFILMTQHG), 350–370 (LEYPFFYEKLYALLVPSVFVA), and 404–424 (LSLSIPPAGSLVITALIYNLL).

It belongs to the CBF/MAK21 family. As to quaternary structure, component of the ribosomal small subunit (SSU) processome composed of at least 40 protein subunits and snoRNA U3. Mostly expressed in flowers and stems and at lower levels in roots, hypocotyls, siliques, leaves and seeds.

The protein localises to the nucleus membrane. It is found in the nucleus. The protein resides in the nucleolus. In terms of biological role, essential protein required during embryogenesis. Involved in nucleolar processing of ribosomal RNA (rRNA) 40S and 90S ribosomal subunits and ribosome assembly; early in ribosome biogenesis, especially required during the maturation of 5.8S rRNA. Has a role in the nuclear export of 40S pre-ribosomal subunit to the cytoplasm. The sequence is that of Protein NUCLEOLAR COMPLEX ASSOCIATED 4 from Arabidopsis thaliana (Mouse-ear cress).